A 98-amino-acid chain; its full sequence is Class II hydrophobin 1 (98 aa).

A signal peptide spans 1–16 (MQFFTTVVLFAAAAMA). Cystine bridges form between cysteine 29/cysteine 79, cysteine 39/cysteine 70, cysteine 40/cysteine 52, and cysteine 80/cysteine 92.

Belongs to the cerato-ulmin hydrophobin family. Homodimer. Homodimers further self-assemble to form highly ordered films at water-air interfaces through intermolecular interactions. In terms of tissue distribution, expressed in mycelium, conidiating mycelium and aerial hyphae.

It localises to the secreted. Its subcellular location is the cell wall. In terms of biological role, aerial growth, conidiation, and dispersal of filamentous fungi in the environment rely upon a capability of their secreting small amphipathic proteins called hydrophobins (HPBs) with low sequence identity. Class I can self-assemble into an outermost layer of rodlet bundles on aerial cell surfaces, conferring cellular hydrophobicity that supports fungal growth, development and dispersal; whereas Class II form highly ordered films at water-air interfaces through intermolecular interactions but contribute nothing to the rodlet structure. Hyd1 is a class II hydrophobin that plays probably a role during conidiophore development and in intraspecific signaling or hyphal fusion. Hyd1 and Hyd3 are jointly required for conidial hydrophobicity and dispersal, but seem not to be involved in mycelia hydrophobicity. Inhibits conidial germination in environments not suitable for mycelial growth. Not necessary for root adhesion and colonization. This is Class II hydrophobin 1 from Bionectria ochroleuca (Gliocladium roseum).